The sequence spans 269 residues: Meiotic drive suppressor wtf5 (269 aa).

The interval 1–65 is disordered; the sequence is MKNNYTSLKS…NTHRENHSYG (65 aa). Residues 19–30 show a composition bias toward basic and acidic residues; it reads KTDHEIDLEKGP. The next 3 helical transmembrane spans lie at 73–95, 110–132, and 206–228; these read LLIILLISFTSIILFNAPEVCYL, WTLFGFWCLVCTLALIFLTYFYE, and WGLKCSLADHIIFVVLSILVFIA.

This sequence belongs to the WTF family. In terms of assembly, homomer. Interacts with other proteins that exhibit high sequence similarity.

The protein localises to the spore membrane. It localises to the vacuole membrane. Its function is as follows. Acts as a suppressor component of the dual wtf meiotic drive system, and can suppress but not confer meiotic drive by compatible poisons. Wtf meiotic drive systems promote unequal transmission of alleles from the parental zygote to progeny spores by encoding a poison and an antidote from the same locus; the poison is trans-acting and forms toxic aggregates in all spores within an ascus, wherease the antidote is spore-specific and targets aggregates for degradation by the vacuole. Meiotic drive by wtf systems therefore lead to poisoning of all progeny that do not inherit the dual poison/antidote allele, or express a compatible antidote. This Schizosaccharomyces pombe (strain 972 / ATCC 24843) (Fission yeast) protein is Meiotic drive suppressor wtf5.